Reading from the N-terminus, the 983-residue chain is UPF0182 protein MLBr00644 (983 aa).

The next 7 helical transmembrane spans lie at 19 to 39 (LIMV…LVDA), 63 to 83 (VVVF…GLAV), 113 to 133 (LIGV…AQSY), 175 to 195 (FVAV…FGGI), 210 to 230 (LQLV…YWLD), 259 to 279 (KLIL…AITL), and 287 to 307 (IGLV…PLIV).

This sequence belongs to the UPF0182 family.

Its subcellular location is the cell membrane. This chain is UPF0182 protein MLBr00644, found in Mycobacterium leprae (strain Br4923).